The chain runs to 133 residues: Urease subunit beta (133 aa).

The tract at residues 106-133 is disordered; that stretch reads VFRPNDSNQNAAVKNDAGEDNANKKGGK.

The protein belongs to the urease beta subunit family. Heterotrimer of UreA (gamma), UreB (beta) and UreC (alpha) subunits. Three heterotrimers associate to form the active enzyme.

It is found in the cytoplasm. It carries out the reaction urea + 2 H2O + H(+) = hydrogencarbonate + 2 NH4(+). It functions in the pathway nitrogen metabolism; urea degradation; CO(2) and NH(3) from urea (urease route): step 1/1. This Staphylococcus epidermidis (strain ATCC 12228 / FDA PCI 1200) protein is Urease subunit beta.